A 1774-amino-acid chain; its full sequence is U3 small nucleolar RNA-associated protein 10 (1774 aa).

A disordered region spans residues 1206-1226; it reads YDKHSSAGSNDEEAGSESEAE. The segment covering 1215 to 1226 has biased composition (acidic residues); that stretch reads NDEEAGSESEAE. Residues 1734–1772 form an HEAT repeat; the sequence is LVPIIAELLEDEDEEVEYEVRSGLVKVVESVMGEPFDRY.

It belongs to the HEATR1/UTP10 family. Component of the ribosomal small subunit (SSU) processome.

The protein localises to the nucleus. The protein resides in the nucleolus. In terms of biological role, involved in nucleolar processing of pre-18S ribosomal RNA. Involved in ribosome biosynthesis. This chain is U3 small nucleolar RNA-associated protein 10, found in Kluyveromyces lactis (strain ATCC 8585 / CBS 2359 / DSM 70799 / NBRC 1267 / NRRL Y-1140 / WM37) (Yeast).